Reading from the N-terminus, the 355-residue chain is Anhydro-N-acetylmuramic acid kinase (355 aa).

9 to 16 (GTSLDGVD) provides a ligand contact to ATP.

Belongs to the anhydro-N-acetylmuramic acid kinase family.

The catalysed reaction is 1,6-anhydro-N-acetyl-beta-muramate + ATP + H2O = N-acetyl-D-muramate 6-phosphate + ADP + H(+). The protein operates within amino-sugar metabolism; 1,6-anhydro-N-acetylmuramate degradation. It participates in cell wall biogenesis; peptidoglycan recycling. Catalyzes the specific phosphorylation of 1,6-anhydro-N-acetylmuramic acid (anhMurNAc) with the simultaneous cleavage of the 1,6-anhydro ring, generating MurNAc-6-P. Is required for the utilization of anhMurNAc either imported from the medium or derived from its own cell wall murein, and thus plays a role in cell wall recycling. This chain is Anhydro-N-acetylmuramic acid kinase, found in Paramagnetospirillum magneticum (strain ATCC 700264 / AMB-1) (Magnetospirillum magneticum).